An 840-amino-acid polypeptide reads, in one-letter code: Subtilisin-like protease SBT2.3 (840 aa).

The first 27 residues, Met-1–Gly-27, serve as a signal peptide directing secretion. The propeptide at Gln-28 to Ala-146 is activation peptide. One can recognise an Inhibitor I9 domain in the interval Val-38 to Ala-146. Over residues Lys-61–Ser-81 the composition is skewed to basic residues. The interval Lys-61–Ser-85 is disordered. The N-linked (GlcNAc...) asparagine glycan is linked to Asn-72. Residues Thr-148–Leu-694 enclose the Peptidase S8 domain. The active-site Charge relay system is Asp-180. N-linked (GlcNAc...) asparagine glycosylation is found at Asn-193 and Asn-241. Residue His-255 is the Charge relay system of the active site. N-linked (GlcNAc...) asparagine glycosylation is found at Asn-398, Asn-427, Asn-480, Asn-525, and Asn-553. The 96-residue stretch at Met-418–Ser-513 folds into the PA domain. Ser-619 acts as the Charge relay system in catalysis. 5 N-linked (GlcNAc...) asparagine glycosylation sites follow: Asn-689, Asn-715, Asn-723, Asn-767, and Asn-808.

This sequence belongs to the peptidase S8 family.

It is found in the secreted. In Arabidopsis thaliana (Mouse-ear cress), this protein is Subtilisin-like protease SBT2.3.